A 446-amino-acid polypeptide reads, in one-letter code: Glucose-6-phosphate isomerase (446 aa).

The active-site Proton donor is the Glu-287. Residues His-308 and Lys-422 contribute to the active site.

It belongs to the GPI family.

The protein localises to the cytoplasm. The catalysed reaction is alpha-D-glucose 6-phosphate = beta-D-fructose 6-phosphate. Its pathway is carbohydrate biosynthesis; gluconeogenesis. It participates in carbohydrate degradation; glycolysis; D-glyceraldehyde 3-phosphate and glycerone phosphate from D-glucose: step 2/4. In terms of biological role, catalyzes the reversible isomerization of glucose-6-phosphate to fructose-6-phosphate. In Lactobacillus helveticus (strain DPC 4571), this protein is Glucose-6-phosphate isomerase.